Here is a 57-residue protein sequence, read N- to C-terminus: MATPKRRMSRANTRSRRAQWKAARTELVGVTVAGQRHKVPRRLLKAARLGLIDLDRR.

Over residues 1-19 (MATPKRRMSRANTRSRRAQ) the composition is skewed to basic residues. The tract at residues 1–20 (MATPKRRMSRANTRSRRAQW) is disordered.

This sequence belongs to the bacterial ribosomal protein bL32 family.

The protein is Large ribosomal subunit protein bL32 of Mycobacterium leprae (strain Br4923).